The following is a 245-amino-acid chain: UPF0246 protein cgR_1824 (245 aa).

This sequence belongs to the UPF0246 family.

In Corynebacterium glutamicum (strain R), this protein is UPF0246 protein cgR_1824.